Reading from the N-terminus, the 180-residue chain is Der GTPase-activating protein YihI (180 aa).

2 disordered regions span residues 1-90 and 145-180; these read MSRK…QERR and EPEE…DYKG. A compositionally biased stretch (basic and acidic residues) spans 23–32; the sequence is NRTESDVEGR. Basic residues predominate over residues 33–43; that stretch reads LRKRAKKRKGL. Composition is skewed to basic and acidic residues over residues 50–68 and 80–90; these read SDAE…DPRL and PVKKQTKQERR. The span at 165 to 180 shows a compositional bias: acidic residues; sequence DLLADFDDINFDDYKG.

This sequence belongs to the YihI family. Interacts with Der.

A GTPase-activating protein (GAP) that modifies Der/EngA GTPase function. May play a role in ribosome biogenesis. This chain is Der GTPase-activating protein YihI, found in Vibrio campbellii (strain ATCC BAA-1116).